A 121-amino-acid polypeptide reads, in one-letter code: Replication protein A 14 kDa subunit (121 aa).

Glycyl lysine isopeptide (Lys-Gly) (interchain with G-Cter in ubiquitin) cross-links involve residues Lys-39 and Lys-88.

This sequence belongs to the replication factor A protein 3 family. As to quaternary structure, component of the canonical replication protein A complex (RPA), a heterotrimer composed of RPA1, RPA2 and RPA3. Also a component of the aRPA, the alternative replication protein A complex, a trimeric complex similar to the replication protein A complex/RPA but where RPA1 and RPA3 are associated with RPA4 instead of RPA2. Ubiquitinated by RFWD3 at stalled replication forks in response to DNA damage: ubiquitination by RFWD3 does not lead to degradation by the proteasome and promotes removal of the RPA complex from stalled replication forks, promoting homologous recombination.

It is found in the nucleus. In terms of biological role, as part of the heterotrimeric replication protein A complex (RPA/RP-A), binds and stabilizes single-stranded DNA intermediates, that form during DNA replication or upon DNA stress. It prevents their reannealing and in parallel, recruits and activates different proteins and complexes involved in DNA metabolism. Thereby, it plays an essential role both in DNA replication and the cellular response to DNA damage. In the cellular response to DNA damage, the RPA complex controls DNA repair and DNA damage checkpoint activation. Through recruitment of ATRIP activates the ATR kinase a master regulator of the DNA damage response. It is required for the recruitment of the DNA double-strand break repair factors RAD51 and RAD52 to chromatin, in response to DNA damage. Also recruits to sites of DNA damage proteins like XPA and XPG that are involved in nucleotide excision repair and is required for this mechanism of DNA repair. Also plays a role in base excision repair (BER), probably through interaction with UNG. Also recruits SMARCAL1/HARP, which is involved in replication fork restart, to sites of DNA damage. May also play a role in telomere maintenance. RPA3 has its own single-stranded DNA-binding activity and may be responsible for polarity of the binding of the complex to DNA. This is Replication protein A 14 kDa subunit (Rpa3) from Mus musculus (Mouse).